A 218-amino-acid polypeptide reads, in one-letter code: uncharacterized protein (218 aa).

Polar residues-rich tracts occupy residues 1–21 (MSSQ…SSEF) and 68–102 (LNTS…SSDI). Disordered regions lie at residues 1–39 (MSSQ…RHAS), 63–116 (EKRL…STSG), and 170–205 (GAKR…GTPQ). Over residues 183-195 (KRQEKQSPLESRH) the composition is skewed to basic and acidic residues.

This is an uncharacterized protein from Caenorhabditis elegans.